A 306-amino-acid chain; its full sequence is Protein SULFUR DEFICIENCY-INDUCED 1 (306 aa).

TPR repeat units follow at residues 1–22, 71–104, 107–140, 167–200, and 202–233; these read MERSLKKTKNNYNNSIKSNLMK, DSALKDMAVVMKQLDRSEEAIEAIKSFRPRCSKN, DSLDNVLIDLYKKCGRMEEQVELLKRKLRQIYQG, SRLLGNLGWAYMQQAKYLSAEAVYRKAQMVEPDA, and KSCNLAMCLIKQGRFEEGRLVLDDVLEYRVLG. Residues 72-139 are a coiled coil; sequence SALKDMAVVM…LKRKLRQIYQ (68 aa). The stretch at 238 to 260 forms a coiled coil; sequence RTRQRAEELLSELESSLPRMRDA. Residues 270–304 form a TPR 6 repeat; the sequence is LDDDFVLGLEEMTSTSFKSKRLPIFEQISSFRNTL.

This sequence belongs to the MS5 protein family.

The protein resides in the nucleus. Involved in the utilization of stored sulfate under sulfur-deficient conditions. The sequence is that of Protein SULFUR DEFICIENCY-INDUCED 1 from Arabidopsis thaliana (Mouse-ear cress).